The chain runs to 193 residues: MGLTTANTTLVAPQPKGILDPRTGKPVGSDDAFFNDLNSELSDKGFIVTSADALITWARTGSLMWMTFGLACCAVEMMHISMPRYDAERFGIAPRASPRQSDVMIVAGTLTNKMAPALRKVYDQMPEPRYVISMGSCANGGGYYHYSYSVVRGCDRVVPVDIYVPGCPPTAEALLYGILMLQKKIRRTGTIER.

The [4Fe-4S] cluster site is built by Cys-72, Cys-73, Cys-137, and Cys-167.

This sequence belongs to the complex I 20 kDa subunit family. NDH-1 is composed of 14 different subunits. Subunits NuoB, C, D, E, F, and G constitute the peripheral sector of the complex. It depends on [4Fe-4S] cluster as a cofactor.

It localises to the cell inner membrane. It carries out the reaction a quinone + NADH + 5 H(+)(in) = a quinol + NAD(+) + 4 H(+)(out). NDH-1 shuttles electrons from NADH, via FMN and iron-sulfur (Fe-S) centers, to quinones in the respiratory chain. Couples the redox reaction to proton translocation (for every two electrons transferred, four hydrogen ions are translocated across the cytoplasmic membrane), and thus conserves the redox energy in a proton gradient. This Brucella anthropi (strain ATCC 49188 / DSM 6882 / CCUG 24695 / JCM 21032 / LMG 3331 / NBRC 15819 / NCTC 12168 / Alc 37) (Ochrobactrum anthropi) protein is NADH-quinone oxidoreductase subunit B.